The primary structure comprises 294 residues: uncharacterized protein (294 aa).

Residues 181–204 (DEPFPTTKNHNNDKRETNDKDDQQ) are disordered. Residues 190 to 204 (HNNDKRETNDKDDQQ) show a composition bias toward basic and acidic residues.

The protein belongs to the IIV-6 391R family.

This is an uncharacterized protein from Acheta domesticus (House cricket).